Here is a 904-residue protein sequence, read N- to C-terminus: Auxilin-related protein 1 (904 aa).

3 disordered regions span residues 46-99 (AAGK…FDYD), 150-731 (SSIS…NLRK), and 749-776 (SASQ…RHQR). Residues 59–69 (DPGRDGDDLLF) show a composition bias toward basic and acidic residues. Low complexity predominate over residues 81 to 95 (YGSSSGDSRSPSAPA). The span at 178–188 (KGADSDREEKG) shows a compositional bias: basic and acidic residues. Residues 201–215 (RTSSPPSKRTTSETT) show a composition bias toward low complexity. Acidic residues predominate over residues 232–244 (VEEDPFVVLEESE). Residues 245-271 (STPREPSRTDPLDDIGKFNSRKTDHSS) show a composition bias toward basic and acidic residues. Positions 370 to 383 (SAPPPTRPPPPRPT) are enriched in pro residues. The segment covering 394–419 (SIPTSAYHSHVPSSGRASVNSPTASQ) has biased composition (polar residues). Residues 456-663 (SAAAMKDAMD…AAAEARGRAA (208 aa)) adopt a coiled-coil conformation. Basic and acidic residues-rich tracts occupy residues 462-570 (DAMD…EAHA) and 581-660 (TDAR…EARG). The R domain occupies 619–640 (REKAEKAAAEAKERANAEAREK). The span at 661 to 673 (RAAAQAKAKQQQE) shows a compositional bias: low complexity. The span at 674-697 (NTNDLDSFFSSISRPNSAPRQRTN) shows a compositional bias: polar residues. Residues 762 to 804 (ETEERRRARLERHQRTQERAAKALAEKNERDLQVQREQVEKDR) are a coiled coil. The segment covering 764–776 (EERRRARLERHQR) has biased composition (basic and acidic residues). The J domain occupies 839–904 (CGWQPVSLTD…WNKFNSEELF (66 aa)).

As to quaternary structure, interacts with SH3P1.

The protein resides in the cell membrane. Its subcellular location is the golgi apparatus. It localises to the trans-Golgi network. It is found in the endoplasmic reticulum. The protein localises to the cytoplasmic vesicle. Its function is as follows. Promotes uncoating of clathrin-coated vesicles. May interact directly with clathrin. The polypeptide is Auxilin-related protein 1 (Arabidopsis thaliana (Mouse-ear cress)).